A 355-amino-acid polypeptide reads, in one-letter code: UDP-N-acetylglucosamine--N-acetylmuramyl-(pentapeptide) pyrophosphoryl-undecaprenol N-acetylglucosamine transferase (355 aa).

UDP-N-acetyl-alpha-D-glucosamine-binding positions include 14-16 (SGG), Asn126, Arg162, Ser190, Ile243, 262-267 (ALTVSE), and Gln288.

Belongs to the glycosyltransferase 28 family. MurG subfamily.

It localises to the cell inner membrane. The enzyme catalyses di-trans,octa-cis-undecaprenyl diphospho-N-acetyl-alpha-D-muramoyl-L-alanyl-D-glutamyl-meso-2,6-diaminopimeloyl-D-alanyl-D-alanine + UDP-N-acetyl-alpha-D-glucosamine = di-trans,octa-cis-undecaprenyl diphospho-[N-acetyl-alpha-D-glucosaminyl-(1-&gt;4)]-N-acetyl-alpha-D-muramoyl-L-alanyl-D-glutamyl-meso-2,6-diaminopimeloyl-D-alanyl-D-alanine + UDP + H(+). It participates in cell wall biogenesis; peptidoglycan biosynthesis. Cell wall formation. Catalyzes the transfer of a GlcNAc subunit on undecaprenyl-pyrophosphoryl-MurNAc-pentapeptide (lipid intermediate I) to form undecaprenyl-pyrophosphoryl-MurNAc-(pentapeptide)GlcNAc (lipid intermediate II). This is UDP-N-acetylglucosamine--N-acetylmuramyl-(pentapeptide) pyrophosphoryl-undecaprenol N-acetylglucosamine transferase from Blochmanniella pennsylvanica (strain BPEN).